A 1524-amino-acid chain; its full sequence is DNA polymerase alpha catalytic subunit (1524 aa).

Disordered regions lie at residues 1-53 (MSGD…QKPI) and 68-139 (RRRE…KVNP). Positions 20-30 (SSRKDTLERLK) are enriched in basic and acidic residues. Residues 79 to 96 (EDGEGGDLGYLDEGEEED) are compositionally biased toward acidic residues. Zn(2+) contacts are provided by Cys-1333, Cys-1336, Cys-1375, Cys-1378, Cys-1414, Cys-1419, Cys-1440, and Cys-1446. The CysA-type zinc finger occupies 1333-1378 (CPSCSTAFNCPSIISSVCASISKKPATPETEESDSTFWLKLHCPKC). The short motif at 1414–1446 (CEDESCKHTTRSPNFRLLGERERGTVCPNYPNC) is the CysB motif element.

This sequence belongs to the DNA polymerase type-B family.

The protein localises to the nucleus. The enzyme catalyses DNA(n) + a 2'-deoxyribonucleoside 5'-triphosphate = DNA(n+1) + diphosphate. Polymerase alpha in a complex with DNA primase is a replicative polymerase. This chain is DNA polymerase alpha catalytic subunit (POLA), found in Arabidopsis thaliana (Mouse-ear cress).